The primary structure comprises 190 residues: Shikimate kinase (190 aa).

An ATP-binding site is contributed by 15 to 20 (GSGKST). Ser-19 is a binding site for Mg(2+). 3 residues coordinate substrate: Asp-37, Arg-61, and Gly-83. Arg-121 is an ATP binding site. Residue Arg-148 participates in substrate binding.

The protein belongs to the shikimate kinase family. As to quaternary structure, monomer. Mg(2+) is required as a cofactor.

The protein resides in the cytoplasm. The catalysed reaction is shikimate + ATP = 3-phosphoshikimate + ADP + H(+). Its pathway is metabolic intermediate biosynthesis; chorismate biosynthesis; chorismate from D-erythrose 4-phosphate and phosphoenolpyruvate: step 5/7. Its function is as follows. Catalyzes the specific phosphorylation of the 3-hydroxyl group of shikimic acid using ATP as a cosubstrate. This chain is Shikimate kinase, found in Chlorobium chlorochromatii (strain CaD3).